A 466-amino-acid chain; its full sequence is 3-isopropylmalate dehydratase large subunit (466 aa).

Residues C346, C406, and C409 each contribute to the [4Fe-4S] cluster site.

It belongs to the aconitase/IPM isomerase family. LeuC type 1 subfamily. In terms of assembly, heterodimer of LeuC and LeuD. Requires [4Fe-4S] cluster as cofactor.

The enzyme catalyses (2R,3S)-3-isopropylmalate = (2S)-2-isopropylmalate. Its pathway is amino-acid biosynthesis; L-leucine biosynthesis; L-leucine from 3-methyl-2-oxobutanoate: step 2/4. Catalyzes the isomerization between 2-isopropylmalate and 3-isopropylmalate, via the formation of 2-isopropylmaleate. The protein is 3-isopropylmalate dehydratase large subunit of Alteromonas mediterranea (strain DSM 17117 / CIP 110805 / LMG 28347 / Deep ecotype).